The following is a 956-amino-acid chain: MEEFVIPVFSETEIPYSLLSHYPLAVRTNVKIANVDEGHDVVKIPESDMIDVPRVSIVEALAAKPTRNDGIVVPRLLDITLRAYDDRKAMKSARGVEFMTNAKWMKWAIDDRMDIQPLKVAIDDHNAVNHQLFNCIVKARPANADTVYYSYFPLRDKVKKCNHTNLDLLRGLTTTEMFHMLQGAAYCLKSSYELITNSERNNTEETYAPGVHNRIRLVRGTRIGYKGEAYSRFVSSLVQVRIQGQTPPEIVDDIARLNEIRTEWINAQFDSTKIRALELCKILSAIGRKMLNTHEEPKDEMDLSTRFQFKLDDKFKKTDSEHINIFNVGAPATHEGRFYALIAIAATDTQRGRVWRTNPYPCLRGALIAAECQLGDVYHTLRQVYKWSLRQDYGRTEVPLENNKYVFSRINLFDSNLEVGDQVVHWKYEIDGPAETTYDNGYICKTEREDGELVCKISEEKYKTMLDRMIQGGWDQERFKLYSVLTDPNLLTIDFEKDAYLNIRSEFVLPSYFDQWIYSPMFNARLRITHGEIGTRKSADPWNKRVVFGYVKASTESPEYALGQYFDTRIQLYGDALSLKQSQSAVFQHQSQQEDFPVLTSYAKGDVVCPHSGGALYTFRKVALMLMANYERLSPDLHEGMEDHTYTHPSIGGANQKRILEMRDFSQLICFIIDYIFERHDQLRDMREARRILYLVQSLGEPQRLDVLSVASPNFSRYFLKLKDVQRISDLNVINFLPLLFLIQDNISYWHRQWAVPMILYDDTIKLIPVEVGAYANRFGIKSFFNFTRFHPGDAKKRQKADDTHKEFGLISFNYYANTKIAQGGVHTPVVTTKLDTLKIHLSSLCAGLADSVVYTLPVAHPKKCIVLIIVGDDKLEPHVRSEQVVSKYYFSRKHVSGVVSICIGQNDQLKVYSSGIVRHRICEKFILRYKCKVVLVKMPGYVFGNDELMTKLLNV.

This sequence belongs to the orbivirus VP2 family.

It localises to the virion. In terms of biological role, the VP2 protein is one of the two proteins (with VP5) which constitute the virus particle outer capsid. It is the major target of the host immunogenic response. Responsible for viral attachment to target host cell, probably by binding to sialic acid. This attachment induces virion internalization predominantly through clathrin-dependent endocytosis. The chain is Outer capsid protein VP2 (Segment-2) from Bluetongue virus 11 (isolate USA) (BTV 11).